A 176-amino-acid polypeptide reads, in one-letter code: Crossover junction endodeoxyribonuclease RuvC (176 aa).

Active-site residues include D12, E72, and D144. Residues D12, E72, and D144 each coordinate Mg(2+).

It belongs to the RuvC family. In terms of assembly, homodimer which binds Holliday junction (HJ) DNA. The HJ becomes 2-fold symmetrical on binding to RuvC with unstacked arms; it has a different conformation from HJ DNA in complex with RuvA. In the full resolvosome a probable DNA-RuvA(4)-RuvB(12)-RuvC(2) complex forms which resolves the HJ. It depends on Mg(2+) as a cofactor.

The protein resides in the cytoplasm. It catalyses the reaction Endonucleolytic cleavage at a junction such as a reciprocal single-stranded crossover between two homologous DNA duplexes (Holliday junction).. Functionally, the RuvA-RuvB-RuvC complex processes Holliday junction (HJ) DNA during genetic recombination and DNA repair. Endonuclease that resolves HJ intermediates. Cleaves cruciform DNA by making single-stranded nicks across the HJ at symmetrical positions within the homologous arms, yielding a 5'-phosphate and a 3'-hydroxyl group; requires a central core of homology in the junction. The consensus cleavage sequence is 5'-(A/T)TT(C/G)-3'. Cleavage occurs on the 3'-side of the TT dinucleotide at the point of strand exchange. HJ branch migration catalyzed by RuvA-RuvB allows RuvC to scan DNA until it finds its consensus sequence, where it cleaves and resolves the cruciform DNA. This Methylocella silvestris (strain DSM 15510 / CIP 108128 / LMG 27833 / NCIMB 13906 / BL2) protein is Crossover junction endodeoxyribonuclease RuvC.